A 114-amino-acid polypeptide reads, in one-letter code: Fumarate reductase subunit D (114 aa).

Helical transmembrane passes span 27–47 (ICFPVLLLILGVLLPLGLVPV), 50–70 (IVAFAHTWFGKLVILAVTIFP), and 94–114 (WVFYGLSALYSVIVFFAVIAL).

This sequence belongs to the FrdD family. As to quaternary structure, part of an enzyme complex containing four subunits: a flavoprotein (FrdA), an iron-sulfur protein (FrdB), and two hydrophobic anchor proteins (FrdC and FrdD).

Its subcellular location is the cell inner membrane. In terms of biological role, anchors the catalytic components of the fumarate reductase complex to the cell membrane, binds quinones. The chain is Fumarate reductase subunit D from Actinobacillus pleuropneumoniae serotype 3 (strain JL03).